Reading from the N-terminus, the 411-residue chain is Prophage integrase IntR (411 aa).

One can recognise a Core-binding (CB) domain in the interval 81–176 (KTFGELCDIW…LLCSLLRFAY (96 aa)). Residues 197–404 (IKPDPLSKTE…IDDMNDEQIA (208 aa)) form the Tyr recombinase domain. Active-site residues include Arg231, Lys266, Arg358, and His381. The active-site O-(3'-phospho-DNA)-tyrosine intermediate is Tyr391.

Belongs to the 'phage' integrase family.

Functionally, integrase is necessary for integration of the phage into the host genome by site-specific recombination. In conjunction with excisionase, integrase is also necessary for excision of the prophage from the host genome. The chain is Prophage integrase IntR (intR) from Escherichia coli (strain K12).